The following is a 398-amino-acid chain: Probable RNA methyltransferase sce1580 (398 aa).

The segment at Met-1–Ala-24 is disordered. The active-site Proton acceptor is the Glu-140. One can recognise a Radical SAM core domain in the interval Gly-146–Asp-378. Cys-153 and Cys-383 form a disulfide bridge. The [4Fe-4S] cluster site is built by Cys-160, Cys-164, and Cys-167. S-adenosyl-L-methionine is bound by residues Gly-211–Glu-212, Ser-243, Ser-265–Asn-267, and Asn-340. Cys-383 (S-methylcysteine intermediate) is an active-site residue.

The protein belongs to the radical SAM superfamily. RlmN family. [4Fe-4S] cluster is required as a cofactor.

It is found in the cytoplasm. The protein is Probable RNA methyltransferase sce1580 of Sorangium cellulosum (strain So ce56) (Polyangium cellulosum (strain So ce56)).